A 1058-amino-acid chain; its full sequence is Vacuolar protein sorting-associated protein 54 (1058 aa).

A coiled-coil region spans residues 369–389; that stretch reads SKKIVEVHERYEQKKKLLAKL.

This sequence belongs to the VPS54 family. In terms of assembly, component of the Golgi-associated retrograde protein (GARP) complex, also called VFT (VPS fifty-three) complex, composed of vps-51, vps-52, vps-53 and vps-54. Within the complex interacts with vps-52 and vps-53.

The protein resides in the golgi apparatus. Its subcellular location is the trans-Golgi network. Functionally, acts as a component of the GARP complex that is involved in retrograde transport from early and late endosomes to the trans-Golgi network (TGN). The GARP complex facilitates tethering as well as SNARE complex assembly at the Golgi. This is Vacuolar protein sorting-associated protein 54 from Caenorhabditis elegans.